The chain runs to 465 residues: UDP-N-acetylmuramate--L-alanine ligase (465 aa).

Residue Gly112–Thr118 participates in ATP binding.

Belongs to the MurCDEF family.

It is found in the cytoplasm. It carries out the reaction UDP-N-acetyl-alpha-D-muramate + L-alanine + ATP = UDP-N-acetyl-alpha-D-muramoyl-L-alanine + ADP + phosphate + H(+). Its pathway is cell wall biogenesis; peptidoglycan biosynthesis. Functionally, cell wall formation. This chain is UDP-N-acetylmuramate--L-alanine ligase, found in Burkholderia cenocepacia (strain HI2424).